We begin with the raw amino-acid sequence, 315 residues long: Glutathione synthetase (315 aa).

Residues 125 to 310 (KLYTAWFADL…ITGMLMDAIE (186 aa)) form the ATP-grasp domain. 151-207 (WEKHGDIIMKPLDGMGGASIFRVKEGDPNIGVIAETLTELGNRYCMAQNYLPAIKDG) contacts ATP. Mg(2+) contacts are provided by glutamate 281 and asparagine 283.

This sequence belongs to the prokaryotic GSH synthase family. Mg(2+) serves as cofactor. Requires Mn(2+) as cofactor.

It catalyses the reaction gamma-L-glutamyl-L-cysteine + glycine + ATP = glutathione + ADP + phosphate + H(+). The protein operates within sulfur metabolism; glutathione biosynthesis; glutathione from L-cysteine and L-glutamate: step 2/2. The polypeptide is Glutathione synthetase (Salmonella typhi).